A 379-amino-acid chain; its full sequence is Heme chaperone HemW (379 aa).

A Radical SAM core domain is found at 1 to 232; the sequence is MLQKPNSAYF…MDILAKNGYN (232 aa). An S-adenosyl-L-methionine-binding site is contributed by Tyr9. Residues Cys15, Cys19, and Cys22 each contribute to the [4Fe-4S] cluster site. S-adenosyl-L-methionine contacts are provided by residues Gly60, 61–62, Glu93, Gln120, Arg132, and Asp157; that span reads GT.

It belongs to the anaerobic coproporphyrinogen-III oxidase family. HemW subfamily. Homodimer.

The protein localises to the cytoplasm. It localises to the cell membrane. Its function is as follows. Could serve in the delivery of heme to a membrane-localized target protein. Binds one molecule of heme per monomer, possibly covalently; heme and Fe-S cluster binding are independent. Incubation with the reductant sodium dithionite increases binding. Does not have coproporphyrinogen III dehydrogenase activity in vitro, does not complement an E.coli hemN deletion in vivo. Binds 1 Fe-S cluster, it is probably [4Fe-4S]. The cluster is coordinated with 3 cysteines and an exchangeable S-adenosyl-L-methionine; only dimeric protein has the cluster. The polypeptide is Heme chaperone HemW (Lactococcus lactis subsp. lactis (strain IL1403) (Streptococcus lactis)).